Here is a 456-residue protein sequence, read N- to C-terminus: MKKVFIKTYGCQMNEYDSDKMSDVLNAAEGLVPTDTPEDADVILFNTCSVREKAQEKVFSELGRVKALKALKPDLVVGVGGCVASQEGASIVARAPYVDVVFGPQTLHRLPDLIAARRRTGRSQVDVSFPEIEKFDHLPPARVDGASAYVSIMEGCSKYCSYCVVPYTRGEEVSRPFDDVLAEVAGLAEQGVREVTLLGQNVNAYIGKMGDTSERADFALLLEYVAEIPGIERIRYTTSHPKEFSSRLIEAYATNPKLVDHLHLPVQHGSDRILMAMKRGYTVLEYKSSIRKLRAIRPNISIATDFIVGFPGETDADFAKTMDLIHEIGYDTSFSFIYSPRPGTPAANLHDDTPQAVKLERLKHLQATIEENVARISQGMVGSVQRILVEGPSRKDPTELHGRTENNRVVNFALPDLPQVRREQLIGQMLDVRIVHAFPHSLRGEVAEERMASAAH.

The region spanning 2-119 (KKVFIKTYGC…LPDLIAARRR (118 aa)) is the MTTase N-terminal domain. Cys11, Cys48, Cys82, Cys156, Cys160, and Cys163 together coordinate [4Fe-4S] cluster. The 234-residue stretch at 142-375 (RVDGASAYVS…QATIEENVAR (234 aa)) folds into the Radical SAM core domain. Positions 378 to 448 (QGMVGSVQRI…PHSLRGEVAE (71 aa)) constitute a TRAM domain.

It belongs to the methylthiotransferase family. MiaB subfamily. Monomer. [4Fe-4S] cluster serves as cofactor.

Its subcellular location is the cytoplasm. The catalysed reaction is N(6)-dimethylallyladenosine(37) in tRNA + (sulfur carrier)-SH + AH2 + 2 S-adenosyl-L-methionine = 2-methylsulfanyl-N(6)-dimethylallyladenosine(37) in tRNA + (sulfur carrier)-H + 5'-deoxyadenosine + L-methionine + A + S-adenosyl-L-homocysteine + 2 H(+). Functionally, catalyzes the methylthiolation of N6-(dimethylallyl)adenosine (i(6)A), leading to the formation of 2-methylthio-N6-(dimethylallyl)adenosine (ms(2)i(6)A) at position 37 in tRNAs that read codons beginning with uridine. The sequence is that of tRNA-2-methylthio-N(6)-dimethylallyladenosine synthase from Ralstonia pickettii (strain 12J).